The primary structure comprises 834 residues: Prominin-2 (834 aa).

A signal peptide spans 1–26 (MKHTLALLAPLLGLGLGLALSQLAAG). The Extracellular segment spans residues 27-106 (ATDCKFLGPA…NEVVRYEAGY (80 aa)). The helical transmembrane segment at 107-127 (VVCAVIAGLYLLLVPTAGLCF) threads the bilayer. Residues 128 to 153 (CCCRCHRRCGGRVKTEHKALACERAA) are Cytoplasmic-facing. Residues 154–174 (LMVFLLLTTLLLLIGVVCAFV) form a helical membrane-spanning segment. At 175 to 426 (TNQRTHEQMG…EVQRYETYRW (252 aa)) the chain is on the extracellular side. N-linked (GlcNAc...) asparagine glycosylation is present at N270. The helical transmembrane segment at 427 to 447 (IVGCVLCSVVLFVVLCNLLGL) threads the bilayer. Over 448–472 (NLGIWGLSARDDPSHPEAKGEAGAR) the chain is Cytoplasmic. A helical transmembrane segment spans residues 473–493 (FLMAGVGLSFLFAAPLILLVF). The Extracellular portion of the chain corresponds to 494–779 (ATFLVGGNVQ…LCDMMADPWN (286 aa)). S727 carries the phosphoserine modification. Residues 780–800 (AFWFCLAWCTFFLIPSIIFAV) traverse the membrane as a helical segment. The Cytoplasmic segment spans residues 801–834 (KTSKYFRPIRKRLSSTSSEETQLFHIPRVTSLKL). S818 carries the post-translational modification Phosphoserine.

Belongs to the prominin family. Binds cholesterol. In terms of processing, glycosylated. In terms of tissue distribution, present in saliva within small membrane particles (at protein level). Expressed in kidney, prostate, trachea, esophagus, salivary gland, thyroid gland, mammary gland adrenal gland, placenta, stomach, spinal cord and liver. In submucosal tumor, expressed in spindle-shaped or stellate stromal cells. Expressed in prostate cancer cell lines.

The protein resides in the apical cell membrane. Its subcellular location is the basolateral cell membrane. It localises to the cell projection. The protein localises to the microvillus membrane. It is found in the cilium membrane. The protein is Prominin-2 (PROM2) of Homo sapiens (Human).